A 199-amino-acid polypeptide reads, in one-letter code: ATP-dependent Clp protease proteolytic subunit (199 aa).

The active-site Nucleophile is Ser-103. His-128 is an active-site residue.

Belongs to the peptidase S14 family. In terms of assembly, fourteen ClpP subunits assemble into 2 heptameric rings which stack back to back to give a disk-like structure with a central cavity, resembling the structure of eukaryotic proteasomes.

The protein resides in the cytoplasm. The catalysed reaction is Hydrolysis of proteins to small peptides in the presence of ATP and magnesium. alpha-casein is the usual test substrate. In the absence of ATP, only oligopeptides shorter than five residues are hydrolyzed (such as succinyl-Leu-Tyr-|-NHMec, and Leu-Tyr-Leu-|-Tyr-Trp, in which cleavage of the -Tyr-|-Leu- and -Tyr-|-Trp bonds also occurs).. Functionally, cleaves peptides in various proteins in a process that requires ATP hydrolysis. Has a chymotrypsin-like activity. Plays a major role in the degradation of misfolded proteins. This chain is ATP-dependent Clp protease proteolytic subunit, found in Photobacterium profundum (strain SS9).